The following is a 242-amino-acid chain: Pyridoxine 5'-phosphate synthase (242 aa).

Asparagine 8 serves as a coordination point for 3-amino-2-oxopropyl phosphate. Position 10 to 11 (10 to 11) interacts with 1-deoxy-D-xylulose 5-phosphate; the sequence is DH. Residue arginine 19 coordinates 3-amino-2-oxopropyl phosphate. Catalysis depends on histidine 44, which acts as the Proton acceptor. Residues arginine 46 and histidine 51 each coordinate 1-deoxy-D-xylulose 5-phosphate. Residue glutamate 71 is the Proton acceptor of the active site. Threonine 101 provides a ligand contact to 1-deoxy-D-xylulose 5-phosphate. Histidine 193 functions as the Proton donor in the catalytic mechanism. Residues glycine 194 and 215–216 each bind 3-amino-2-oxopropyl phosphate; that span reads GF.

Belongs to the PNP synthase family. As to quaternary structure, homooctamer; tetramer of dimers.

The protein localises to the cytoplasm. It carries out the reaction 3-amino-2-oxopropyl phosphate + 1-deoxy-D-xylulose 5-phosphate = pyridoxine 5'-phosphate + phosphate + 2 H2O + H(+). It functions in the pathway cofactor biosynthesis; pyridoxine 5'-phosphate biosynthesis; pyridoxine 5'-phosphate from D-erythrose 4-phosphate: step 5/5. In terms of biological role, catalyzes the complicated ring closure reaction between the two acyclic compounds 1-deoxy-D-xylulose-5-phosphate (DXP) and 3-amino-2-oxopropyl phosphate (1-amino-acetone-3-phosphate or AAP) to form pyridoxine 5'-phosphate (PNP) and inorganic phosphate. This chain is Pyridoxine 5'-phosphate synthase, found in Elusimicrobium minutum (strain Pei191).